Consider the following 717-residue polypeptide: Probable cyclic nucleotide-gated ion channel 5 (717 aa).

The Cytoplasmic portion of the chain corresponds to 1–102 (MAGKRENFVR…DKFLLYCNKL (102 aa)). A helical transmembrane segment spans residues 103–123 (FVASCILSVFVDPFFFYLPVI). At 124-136 (NAESKCLGIDRKL) the chain is on the extracellular side. Residues 137 to 157 (AITASTLRTFIDVFYLAHMAL) traverse the membrane as a helical segment. Over 158–190 (QLRTAYIAPSSRVFGRGELVIDPAQIAKRYLQR) the chain is Cytoplasmic. The chain crosses the membrane as a helical span at residues 191–211 (WFIIDFLSVLPLPQIVVWRFL). Residues 212 to 224 (QSSNGSDVLATKQ) lie on the Extracellular side of the membrane. The chain crosses the membrane as a helical span at residues 225–245 (ALLFIVLVQYIPRFLRVLPLT). Topologically, residues 246-265 (SELKRTAGVFAETAWAGAAY) are cytoplasmic. A helical membrane pass occupies residues 266–286 (YLLLYMLASHIVGAFWYLLAL). The Extracellular portion of the chain corresponds to 287 to 391 (ERNDACWQEA…GQGLETSTYP (105 aa)). The helical transmembrane segment at 392 to 412 (MEIIFSISLAISGLILFALLI) threads the bilayer. Topologically, residues 413-717 (GNMQTYLQSL…KPPEPDFTAD (305 aa)) are cytoplasmic. Residues 498 to 628 (LFKS…TFRF) and E569 contribute to the a nucleoside 3',5'-cyclic phosphate site. A calmodulin-binding region spans residues 614–629 (FRRLHSRQVQHTFRFY). The IQ domain maps to 634–663 (RTWAACFIQAAWRRYCKRKKMEEAEAEAAA).

It belongs to the cyclic nucleotide-gated cation channel (TC 1.A.1.5) family. Homotetramer or heterotetramer.

It is found in the cell membrane. Probable cyclic nucleotide-gated ion channel. The polypeptide is Probable cyclic nucleotide-gated ion channel 5 (CNGC5) (Arabidopsis thaliana (Mouse-ear cress)).